The following is a 178-amino-acid chain: Large ribosomal subunit protein uL6 (178 aa).

It belongs to the universal ribosomal protein uL6 family. As to quaternary structure, part of the 50S ribosomal subunit.

In terms of biological role, this protein binds to the 23S rRNA, and is important in its secondary structure. It is located near the subunit interface in the base of the L7/L12 stalk, and near the tRNA binding site of the peptidyltransferase center. The sequence is that of Large ribosomal subunit protein uL6 from Corynebacterium diphtheriae (strain ATCC 700971 / NCTC 13129 / Biotype gravis).